Consider the following 196-residue polypeptide: Holliday junction branch migration complex subunit RuvA (196 aa).

The domain I stretch occupies residues 1-62; it reads MYEYINGLIT…ENEMTLYGFI (62 aa). The tract at residues 63-141 is domain II; that stretch reads DENEKYLFNK…DLALSAGMTV (79 aa). Residues 142–146 are flexible linker; that stretch reads ETVPT. The tract at residues 147 to 196 is domain III; sequence TDNQALADALAALESLGYSAKDVAKLQTVLANQKDTTDGYIRSALKFLVK.

Belongs to the RuvA family. As to quaternary structure, homotetramer. Forms an RuvA(8)-RuvB(12)-Holliday junction (HJ) complex. HJ DNA is sandwiched between 2 RuvA tetramers; dsDNA enters through RuvA and exits via RuvB. An RuvB hexamer assembles on each DNA strand where it exits the tetramer. Each RuvB hexamer is contacted by two RuvA subunits (via domain III) on 2 adjacent RuvB subunits; this complex drives branch migration. In the full resolvosome a probable DNA-RuvA(4)-RuvB(12)-RuvC(2) complex forms which resolves the HJ.

It is found in the cytoplasm. Its function is as follows. The RuvA-RuvB-RuvC complex processes Holliday junction (HJ) DNA during genetic recombination and DNA repair, while the RuvA-RuvB complex plays an important role in the rescue of blocked DNA replication forks via replication fork reversal (RFR). RuvA specifically binds to HJ cruciform DNA, conferring on it an open structure. The RuvB hexamer acts as an ATP-dependent pump, pulling dsDNA into and through the RuvAB complex. HJ branch migration allows RuvC to scan DNA until it finds its consensus sequence, where it cleaves and resolves the cruciform DNA. The polypeptide is Holliday junction branch migration complex subunit RuvA (Leuconostoc citreum (strain KM20)).